Reading from the N-terminus, the 417-residue chain is 4-hydroxy-3-methylbut-2-en-1-yl diphosphate synthase (flavodoxin) (417 aa).

Residues C304, C307, C350, and E357 each coordinate [4Fe-4S] cluster.

This sequence belongs to the IspG family. It depends on [4Fe-4S] cluster as a cofactor.

It carries out the reaction (2E)-4-hydroxy-3-methylbut-2-enyl diphosphate + oxidized [flavodoxin] + H2O + 2 H(+) = 2-C-methyl-D-erythritol 2,4-cyclic diphosphate + reduced [flavodoxin]. Its pathway is isoprenoid biosynthesis; isopentenyl diphosphate biosynthesis via DXP pathway; isopentenyl diphosphate from 1-deoxy-D-xylulose 5-phosphate: step 5/6. Functionally, converts 2C-methyl-D-erythritol 2,4-cyclodiphosphate (ME-2,4cPP) into 1-hydroxy-2-methyl-2-(E)-butenyl 4-diphosphate. This chain is 4-hydroxy-3-methylbut-2-en-1-yl diphosphate synthase (flavodoxin), found in Rhizobium rhizogenes (strain K84 / ATCC BAA-868) (Agrobacterium radiobacter).